Reading from the N-terminus, the 812-residue chain is Phospholipase D alpha 1 (812 aa).

The 130-residue stretch at 1 to 130 folds into the C2 domain; the sequence is MAQILLHGTL…LGGEEIDKWL (130 aa). Asp-190 lines the Ca(2+) pocket. The region spanning 330–368 is the PLD phosphodiesterase 1 domain; the sequence is TMFTHHQKIVVVDHEMPNQGSQQRRIVSFIGGIDLCDGR. Residues His-335, Lys-337, and Asp-342 contribute to the active site. His-335 provides a ligand contact to a 1,2-diacyl-sn-glycero-3-phosphate. The Ca(2+) site is built by His-374 and His-408. Positions 524 and 663 each coordinate a 1,2-diacyl-sn-glycero-3-phosphate. The 28-residue stretch at 658-685 folds into the PLD phosphodiesterase 2 domain; it reads FMIYVHTKMMIVDDEYIIIGSANINQRS. Residues His-663, Lys-665, and Asp-670 contribute to the active site. A Ca(2+)-binding site is contributed by Glu-724.

The protein belongs to the phospholipase D family. C2-PLD subfamily. Monomer. Ca(2+) serves as cofactor.

The enzyme catalyses a 1,2-diacyl-sn-glycero-3-phosphocholine + H2O = a 1,2-diacyl-sn-glycero-3-phosphate + choline + H(+). Hydrolyzes glycerol-phospholipids at the terminal phosphodiesteric bond. Plays an important role in various cellular processes. This is Phospholipase D alpha 1 (PLD1) from Zea mays (Maize).